Reading from the N-terminus, the 89-residue chain is uncharacterized protein (89 aa).

A helical transmembrane segment spans residues 20–39; it reads SFAMTTYLNLFVKLLIFLYI.

It localises to the membrane. This is an uncharacterized protein from Escherichia coli (strain K12).